An 82-amino-acid polypeptide reads, in one-letter code: Large ribosomal subunit protein bL28 (82 aa).

Residues 1-25 (MAKVDQITKKRAMTGNTRSHALNHS) form a disordered region.

Belongs to the bacterial ribosomal protein bL28 family.

In Malacoplasma penetrans (strain HF-2) (Mycoplasma penetrans), this protein is Large ribosomal subunit protein bL28.